A 291-amino-acid polypeptide reads, in one-letter code: Elongation factor Ts (291 aa).

Positions 79 to 82 (TDFV) are involved in Mg(2+) ion dislocation from EF-Tu.

Belongs to the EF-Ts family.

Its subcellular location is the cytoplasm. Its function is as follows. Associates with the EF-Tu.GDP complex and induces the exchange of GDP to GTP. It remains bound to the aminoacyl-tRNA.EF-Tu.GTP complex up to the GTP hydrolysis stage on the ribosome. In Anaplasma marginale (strain St. Maries), this protein is Elongation factor Ts.